Consider the following 207-residue polypeptide: Uracil phosphoribosyltransferase (207 aa).

Residues Arg77, Arg102, and 129 to 137 contribute to the 5-phospho-alpha-D-ribose 1-diphosphate site; that span reads DPMVATGGS. Residues Ile192 and 197–199 each bind uracil; that span reads GDA. Asp198 serves as a coordination point for 5-phospho-alpha-D-ribose 1-diphosphate.

It belongs to the UPRTase family. Mg(2+) is required as a cofactor.

It catalyses the reaction UMP + diphosphate = 5-phospho-alpha-D-ribose 1-diphosphate + uracil. It participates in pyrimidine metabolism; UMP biosynthesis via salvage pathway; UMP from uracil: step 1/1. Allosterically activated by GTP. Functionally, catalyzes the conversion of uracil and 5-phospho-alpha-D-ribose 1-diphosphate (PRPP) to UMP and diphosphate. The sequence is that of Uracil phosphoribosyltransferase from Mycobacterium bovis (strain ATCC BAA-935 / AF2122/97).